A 294-amino-acid polypeptide reads, in one-letter code: Nucleotide-binding protein CPF_0343 (294 aa).

8-15 (GLSGAGKT) is an ATP binding site. Residue 59–62 (DIRG) coordinates GTP.

Belongs to the RapZ-like family.

Functionally, displays ATPase and GTPase activities. The polypeptide is Nucleotide-binding protein CPF_0343 (Clostridium perfringens (strain ATCC 13124 / DSM 756 / JCM 1290 / NCIMB 6125 / NCTC 8237 / Type A)).